The primary structure comprises 489 residues: 2-(3-amino-3-carboxypropyl)histidine synthase subunit 2 (489 aa).

At Met-1 the chain carries N-acetylmethionine. Phosphoserine is present on Ser-7. Residues Cys-89, Cys-110, and Cys-341 each coordinate [4Fe-4S] cluster. Residues 398–489 (PPPESELWDT…AIAYEDEGSG (92 aa)) form a required for function region. Thr-435 carries the phosphothreonine modification. Ser-446 and Ser-456 each carry phosphoserine. At Thr-467 the chain carries Phosphothreonine. A Phosphoserine modification is found at Ser-488.

This sequence belongs to the DPH1/DPH2 family. DPH2 subfamily. In terms of assembly, component of the 2-(3-amino-3-carboxypropyl)histidine synthase complex composed of DPH1, DPH2, DPH3 and a NADH-dependent reductase. Interacts with DPH1. It depends on [4Fe-4S] cluster as a cofactor.

It participates in protein modification; peptidyl-diphthamide biosynthesis. Its function is as follows. Required for the first step of diphthamide biosynthesis, a post-translational modification of histidine which occurs in elongation factor 2. DPH1 and DPH2 transfer a 3-amino-3-carboxypropyl (ACP) group from S-adenosyl-L-methionine (SAM) to a histidine residue, the reaction is assisted by a reduction system comprising DPH3 and a NADH-dependent reductase. Facilitates the reduction of the catalytic iron-sulfur cluster found in the DPH1 subunit. The chain is 2-(3-amino-3-carboxypropyl)histidine synthase subunit 2 (DPH2) from Cricetulus griseus (Chinese hamster).